The following is a 527-amino-acid chain: ATP synthase subunit alpha (527 aa).

177–184 is an ATP binding site; that stretch reads GDRQTGKT.

Belongs to the ATPase alpha/beta chains family. In terms of assembly, F-type ATPases have 2 components, CF(1) - the catalytic core - and CF(0) - the membrane proton channel. CF(1) has five subunits: alpha(3), beta(3), gamma(1), delta(1), epsilon(1). CF(0) has four main subunits: a(1), b(1), b'(1) and c(9-12).

The protein localises to the cell membrane. The enzyme catalyses ATP + H2O + 4 H(+)(in) = ADP + phosphate + 5 H(+)(out). Functionally, produces ATP from ADP in the presence of a proton gradient across the membrane. The alpha chain is a regulatory subunit. This Roseiflexus sp. (strain RS-1) protein is ATP synthase subunit alpha.